A 299-amino-acid polypeptide reads, in one-letter code: Leucine zipper transcription factor-like protein 1 (299 aa).

A coiled-coil region spans residues 96–299; it reads LKLQTDISEL…KRLAKYESED (204 aa). The interval 145 to 299 is interaction with BSS9; the sequence is GTTELLNKEI…KRLAKYESED (155 aa).

This sequence belongs to the LZTFL1 family. In terms of assembly, self-associates. Interacts with BBS9; the interaction mediates the association of LZTL1 with the BBsome complex and regulates BBSome ciliary trafficking. In terms of tissue distribution, highly expressed in testis. Expressed in brain, cerebellum, eye, heart, kidney, liver, lung and trachea. In small intestine, graded expression along the crypt-villus axis with high levels in the villus apex and lower levels in the crypt stem cells (at protein level). Not expressed in skeletal muscle and white adipose tissue.

It is found in the cytoplasm. In terms of biological role, regulates ciliary localization of the BBSome complex. Together with the BBSome complex, controls SMO ciliary trafficking and contributes to the sonic hedgehog (SHH) pathway regulation. May play a role in neurite outgrowth. May have tumor suppressor function. The sequence is that of Leucine zipper transcription factor-like protein 1 (Lztfl1) from Mus musculus (Mouse).